Here is a 405-residue protein sequence, read N- to C-terminus: Phosphopentomutase (405 aa).

Positions 10, 303, 308, 344, 345, and 356 each coordinate Mn(2+).

It belongs to the phosphopentomutase family. Mn(2+) serves as cofactor.

It localises to the cytoplasm. It carries out the reaction 2-deoxy-alpha-D-ribose 1-phosphate = 2-deoxy-D-ribose 5-phosphate. It catalyses the reaction alpha-D-ribose 1-phosphate = D-ribose 5-phosphate. The protein operates within carbohydrate degradation; 2-deoxy-D-ribose 1-phosphate degradation; D-glyceraldehyde 3-phosphate and acetaldehyde from 2-deoxy-alpha-D-ribose 1-phosphate: step 1/2. Functionally, isomerase that catalyzes the conversion of deoxy-ribose 1-phosphate (dRib-1-P) and ribose 1-phosphate (Rib-1-P) to deoxy-ribose 5-phosphate (dRib-5-P) and ribose 5-phosphate (Rib-5-P), respectively. This Shewanella denitrificans (strain OS217 / ATCC BAA-1090 / DSM 15013) protein is Phosphopentomutase.